Reading from the N-terminus, the 303-residue chain is UDP-3-O-acyl-N-acetylglucosamine deacetylase (303 aa).

Zn(2+) is bound by residues H78, H237, and D241. The Proton donor role is filled by H264.

It belongs to the LpxC family. The cofactor is Zn(2+).

It catalyses the reaction a UDP-3-O-[(3R)-3-hydroxyacyl]-N-acetyl-alpha-D-glucosamine + H2O = a UDP-3-O-[(3R)-3-hydroxyacyl]-alpha-D-glucosamine + acetate. Its pathway is glycolipid biosynthesis; lipid IV(A) biosynthesis; lipid IV(A) from (3R)-3-hydroxytetradecanoyl-[acyl-carrier-protein] and UDP-N-acetyl-alpha-D-glucosamine: step 2/6. Functionally, catalyzes the hydrolysis of UDP-3-O-myristoyl-N-acetylglucosamine to form UDP-3-O-myristoylglucosamine and acetate, the committed step in lipid A biosynthesis. In Stenotrophomonas maltophilia (strain R551-3), this protein is UDP-3-O-acyl-N-acetylglucosamine deacetylase.